The following is a 344-amino-acid chain: Heat-inducible transcription repressor HrcA (344 aa).

This sequence belongs to the HrcA family.

In terms of biological role, negative regulator of class I heat shock genes (grpE-dnaK-dnaJ and groELS operons). Prevents heat-shock induction of these operons. The protein is Heat-inducible transcription repressor HrcA of Streptococcus mutans serotype c (strain ATCC 700610 / UA159).